We begin with the raw amino-acid sequence, 168 residues long: Lipoprotein signal peptidase (168 aa).

A run of 4 helical transmembrane segments spans residues 15-35 (WLWL…IVME), 47-67 (VLPF…SFLS), 75-95 (WLFT…MSKL), and 107-127 (AMII…GFVV). Active-site residues include Asp-128 and Asp-146. The helical transmembrane segment at 141–161 (AFNLADTAICLGAAMIILDGF) threads the bilayer.

Belongs to the peptidase A8 family.

The protein resides in the cell inner membrane. The catalysed reaction is Release of signal peptides from bacterial membrane prolipoproteins. Hydrolyzes -Xaa-Yaa-Zaa-|-(S,diacylglyceryl)Cys-, in which Xaa is hydrophobic (preferably Leu), and Yaa (Ala or Ser) and Zaa (Gly or Ala) have small, neutral side chains.. It functions in the pathway protein modification; lipoprotein biosynthesis (signal peptide cleavage). Functionally, this protein specifically catalyzes the removal of signal peptides from prolipoproteins. The protein is Lipoprotein signal peptidase of Vibrio vulnificus (strain CMCP6).